We begin with the raw amino-acid sequence, 243 residues long: 1-(5-phosphoribosyl)-5-[(5-phosphoribosylamino)methylideneamino] imidazole-4-carboxamide isomerase (243 aa).

The active-site Proton acceptor is the Asp-17. Residue Asp-138 is the Proton donor of the active site.

This sequence belongs to the HisA/HisF family.

Its subcellular location is the cytoplasm. The catalysed reaction is 1-(5-phospho-beta-D-ribosyl)-5-[(5-phospho-beta-D-ribosylamino)methylideneamino]imidazole-4-carboxamide = 5-[(5-phospho-1-deoxy-D-ribulos-1-ylimino)methylamino]-1-(5-phospho-beta-D-ribosyl)imidazole-4-carboxamide. It functions in the pathway amino-acid biosynthesis; L-histidine biosynthesis; L-histidine from 5-phospho-alpha-D-ribose 1-diphosphate: step 4/9. The chain is 1-(5-phosphoribosyl)-5-[(5-phosphoribosylamino)methylideneamino] imidazole-4-carboxamide isomerase from Deinococcus geothermalis (strain DSM 11300 / CIP 105573 / AG-3a).